We begin with the raw amino-acid sequence, 297 residues long: Phosphatidylserine decarboxylase proenzyme (297 aa).

Active-site charge relay system; for autoendoproteolytic cleavage activity residues include Asp-100, His-157, and Ser-263. Ser-263 acts as the Schiff-base intermediate with substrate; via pyruvic acid; for decarboxylase activity in catalysis. Position 263 is a pyruvic acid (Ser); by autocatalysis (Ser-263).

It belongs to the phosphatidylserine decarboxylase family. PSD-B subfamily. Prokaryotic type I sub-subfamily. As to quaternary structure, heterodimer of a large membrane-associated beta subunit and a small pyruvoyl-containing alpha subunit. It depends on pyruvate as a cofactor. Is synthesized initially as an inactive proenzyme. Formation of the active enzyme involves a self-maturation process in which the active site pyruvoyl group is generated from an internal serine residue via an autocatalytic post-translational modification. Two non-identical subunits are generated from the proenzyme in this reaction, and the pyruvate is formed at the N-terminus of the alpha chain, which is derived from the carboxyl end of the proenzyme. The autoendoproteolytic cleavage occurs by a canonical serine protease mechanism, in which the side chain hydroxyl group of the serine supplies its oxygen atom to form the C-terminus of the beta chain, while the remainder of the serine residue undergoes an oxidative deamination to produce ammonia and the pyruvoyl prosthetic group on the alpha chain. During this reaction, the Ser that is part of the protease active site of the proenzyme becomes the pyruvoyl prosthetic group, which constitutes an essential element of the active site of the mature decarboxylase.

Its subcellular location is the cell membrane. The enzyme catalyses a 1,2-diacyl-sn-glycero-3-phospho-L-serine + H(+) = a 1,2-diacyl-sn-glycero-3-phosphoethanolamine + CO2. It participates in phospholipid metabolism; phosphatidylethanolamine biosynthesis; phosphatidylethanolamine from CDP-diacylglycerol: step 2/2. Catalyzes the formation of phosphatidylethanolamine (PtdEtn) from phosphatidylserine (PtdSer). This chain is Phosphatidylserine decarboxylase proenzyme, found in Glaesserella parasuis serovar 5 (strain SH0165) (Haemophilus parasuis).